Here is a 268-residue protein sequence, read N- to C-terminus: MNAITNFLRKKNSSCALIPFITAGYPNIDICIKALKVLDREGADLIELGIPYSDALADGPIIQEASQAALKQGIYIEQVLSILTKVIPDLHAPIIIFTYYNPVLVRGVDKFICEISQAGAKGLIIPDLPLEEVDYILELCNLYSIELILFVAPTSSQSRIQLIASKSPGCIYLVSSCGVTGLRDNFDVKIQHLANNIKSTTNKLIMLGFGINNPDQISQIINWNIDGIVVGSAIITHIVGELPQDMLNSLAHFCKKLKYSIHTASNVK.

Residues glutamate 47 and aspartate 58 each act as proton acceptor in the active site.

The protein belongs to the TrpA family. Tetramer of two alpha and two beta chains.

It is found in the plastid. Its subcellular location is the chloroplast. It catalyses the reaction (1S,2R)-1-C-(indol-3-yl)glycerol 3-phosphate + L-serine = D-glyceraldehyde 3-phosphate + L-tryptophan + H2O. It functions in the pathway amino-acid biosynthesis; L-tryptophan biosynthesis; L-tryptophan from chorismate: step 5/5. In terms of biological role, the alpha subunit is responsible for the aldol cleavage of indoleglycerol phosphate to indole and glyceraldehyde 3-phosphate. In Gracilaria tenuistipitata var. liui (Red alga), this protein is Tryptophan synthase alpha chain.